Reading from the N-terminus, the 312-residue chain is Eukaryotic translation initiation factor 2 subunit 2 (312 aa).

Disordered stretches follow at residues 26–104 (AALG…NLDM) and 125–146 (ADQADDDKSEDKENDEDNSSTW). S44 carries the phosphoserine modification. Composition is skewed to acidic residues over residues 90–102 (AASEEPEEEEINL) and 125–142 (ADQADDDKSEDKENDEDN). A Phosphoserine modification is found at S133. T145 carries the post-translational modification Phosphothreonine. A C4-type zinc finger spans residues 260 to 284 (CHTCRSPETILQKDTRLFFLQCESC).

Belongs to the eIF-2-beta/eIF-5 family. Eukaryotic translation initiation factor 2 eIF2 is a heterotrimeric complex composed of an alpha, a beta and a gamma subunit.

The protein localises to the cytoplasm. It is found in the cytosol. Component of the eIF2 complex that functions in the early steps of protein synthesis by forming a ternary complex with GTP and initiator tRNA. This complex binds to a 40S ribosomal subunit, followed by mRNA binding to form a 43S pre-initiation complex (43S PIC). Junction of the 60S ribosomal subunit to form the 80S initiation complex is preceded by hydrolysis of the GTP bound to eIF2 and release of an eIF2-GDP binary complex. In order for eIF2 to recycle and catalyze another round of initiation, the GDP bound to eIF2 must exchange with GTP by way of a reaction catalyzed by eIF2B. The polypeptide is Eukaryotic translation initiation factor 2 subunit 2 (Drosophila melanogaster (Fruit fly)).